The primary structure comprises 452 residues: Exodeoxyribonuclease 7 large subunit (452 aa).

Belongs to the XseA family. In terms of assembly, heterooligomer composed of large and small subunits.

Its subcellular location is the cytoplasm. The catalysed reaction is Exonucleolytic cleavage in either 5'- to 3'- or 3'- to 5'-direction to yield nucleoside 5'-phosphates.. Its function is as follows. Bidirectionally degrades single-stranded DNA into large acid-insoluble oligonucleotides, which are then degraded further into small acid-soluble oligonucleotides. The chain is Exodeoxyribonuclease 7 large subunit from Bordetella avium (strain 197N).